The sequence spans 218 residues: Capsid protein (218 aa).

Methionine 1 is modified (N-acetylmethionine; by host). Low complexity predominate over residues 1–10 (MDKSESTSAG). The tract at residues 1 to 30 (MDKSESTSAGRNRRRRLRRGSRSAPSSSDA) is disordered. The segment covering 11–21 (RNRRRRLRRGS) has biased composition (basic residues).

Belongs to the cucumovirus capsid protein family.

The protein resides in the virion. Functionally, capsid protein. Probably binds RNA and plays a role in packaging. This is Capsid protein from Cucumber mosaic virus (strain Kor) (CMV).